We begin with the raw amino-acid sequence, 141 residues long: Large-conductance mechanosensitive channel (141 aa).

Transmembrane regions (helical) follow at residues 8-28 (FALK…AAFG), 38-58 (IIMP…FFPL), and 80-100 (GNFL…FLIV).

The protein belongs to the MscL family. As to quaternary structure, homopentamer.

The protein localises to the cell inner membrane. Its function is as follows. Channel that opens in response to stretch forces in the membrane lipid bilayer. May participate in the regulation of osmotic pressure changes within the cell. The polypeptide is Large-conductance mechanosensitive channel (Beijerinckia indica subsp. indica (strain ATCC 9039 / DSM 1715 / NCIMB 8712)).